The following is a 246-amino-acid chain: Probable transcriptional regulatory protein WRi_002620 (246 aa).

Residues M1 to S22 form a disordered region.

This sequence belongs to the TACO1 family.

The protein resides in the cytoplasm. The protein is Probable transcriptional regulatory protein WRi_002620 of Wolbachia sp. subsp. Drosophila simulans (strain wRi).